Consider the following 136-residue polypeptide: T-cell receptor beta chain V region LB2 (136 aa).

Positions M1–G21 are cleaved as a signal peptide. A v segment region spans residues D22–S116. A disulfide bond links C45 and C113. The segment at I117–A120 is d segment. The interval S121–L136 is j segment.

The protein is T-cell receptor beta chain V region LB2 of Mus musculus (Mouse).